The sequence spans 337 residues: Protoheme IX farnesyltransferase (337 aa).

Residues 1-17 are compositionally biased toward polar residues; the sequence is MPFSISKDTVSNQTTHV. The disordered stretch occupies residues 1 to 41; sequence MPFSISKDTVSNQTTHVATAPASQRPDPVETKVEQEQGRPR. Basic and acidic residues predominate over residues 27–41; sequence DPVETKVEQEQGRPR. Helical transmembrane passes span 59–79, 81–101, 130–150, 153–173, 196–216, 250–270, 271–291, and 311–331; these read IIELLLVTTLPVMFLASHGVP, LGLVIATMVGGLFAAASANVF, SALIYGIILWIIATIILGFGA, LSAALALIANLFYVFVYSMLL, WTAVTGSVGWEPLVLFFIVFW, VAIQILIYTVMTVAISLVLWP, VAHMGWIYVVVAVVSGAVFIV, and PMGLFHWSNTYLSLLFLAIAV.

It belongs to the UbiA prenyltransferase family. Protoheme IX farnesyltransferase subfamily.

The protein localises to the cell membrane. The catalysed reaction is heme b + (2E,6E)-farnesyl diphosphate + H2O = Fe(II)-heme o + diphosphate. It participates in porphyrin-containing compound metabolism; heme O biosynthesis; heme O from protoheme: step 1/1. Functionally, converts heme B (protoheme IX) to heme O by substitution of the vinyl group on carbon 2 of heme B porphyrin ring with a hydroxyethyl farnesyl side group. The sequence is that of Protoheme IX farnesyltransferase from Cutibacterium acnes (strain DSM 16379 / KPA171202) (Propionibacterium acnes).